A 194-amino-acid polypeptide reads, in one-letter code: Methylated-DNA--protein-cysteine methyltransferase (194 aa).

DNA-binding residues include Tyr125 and Arg139. The active-site Nucleophile; methyl group acceptor is the Cys156. Ser162 serves as a coordination point for DNA.

This sequence belongs to the MGMT family.

The protein resides in the nucleus. It catalyses the reaction a 6-O-methyl-2'-deoxyguanosine in DNA + L-cysteinyl-[protein] = S-methyl-L-cysteinyl-[protein] + a 2'-deoxyguanosine in DNA. It carries out the reaction a 4-O-methyl-thymidine in DNA + L-cysteinyl-[protein] = a thymidine in DNA + S-methyl-L-cysteinyl-[protein]. Involved in the cellular defense against the biological effects of O6-methylguanine (O6-MeG) and O4-methylthymine (O4-MeT) in DNA. Repairs the methylated nucleobase in DNA by stoichiometrically transferring the methyl group to a cysteine residue in the enzyme. This is a suicide reaction: the enzyme is irreversibly inactivated. This is Methylated-DNA--protein-cysteine methyltransferase (MGT1) from Scheffersomyces stipitis (strain ATCC 58785 / CBS 6054 / NBRC 10063 / NRRL Y-11545) (Yeast).